The primary structure comprises 365 residues: Aminomethyltransferase (365 aa).

The protein belongs to the GcvT family. In terms of assembly, the glycine cleavage system is composed of four proteins: P, T, L and H.

It carries out the reaction N(6)-[(R)-S(8)-aminomethyldihydrolipoyl]-L-lysyl-[protein] + (6S)-5,6,7,8-tetrahydrofolate = N(6)-[(R)-dihydrolipoyl]-L-lysyl-[protein] + (6R)-5,10-methylene-5,6,7,8-tetrahydrofolate + NH4(+). Functionally, the glycine cleavage system catalyzes the degradation of glycine. The sequence is that of Aminomethyltransferase from Synechococcus sp. (strain CC9902).